The following is a 217-amino-acid chain: Protein matrimony (217 aa).

The POLO box domain (PBD)-binding motif lies at 39-41 (STP). 2 positions are modified to phosphoserine: serine 63 and serine 66. The segment at 83-106 (KQQQQQQHQHCHRTQLKPPPFVLP) is disordered. Residues 157 to 217 (NHAANVEQIL…NRIMDVLHTL (61 aa)) enclose the SAM domain.

Interacts with polo. Interacts with cort. In terms of processing, probably ubiquitinated: degraded during the oocyte-to-embryo transition by the anaphase promoting complex/cyclosome (APC/C) containing cort protein.

Its subcellular location is the nucleus. The protein localises to the chromosome. In terms of biological role, polo kinase inhibitor required to maintain G2 arrest in the meiotic cell cycle in females. Holds heterochromatically paired homologs together from the end of pachytene until metaphase I. Haploinsufficient locus for homologous achiasmate segregation and may be required for the maintenance of heterochromatic pairings. The polypeptide is Protein matrimony (Drosophila melanogaster (Fruit fly)).